A 461-amino-acid chain; its full sequence is Glycolipid 2-alpha-mannosyltransferase 2 (461 aa).

Topologically, residues 1–12 (MKPSIFYSSRQP) are cytoplasmic. The chain crosses the membrane as a helical; Signal-anchor for type II membrane protein span at residues 13-35 (YLKYLAIILTTITIYVLTHSSYS). The segment covering 35 to 52 (SADPNINDVTTKPISETV) has biased composition (polar residues). The tract at residues 35-138 (SADPNINDVT…SSSKDPVKPE (104 aa)) is disordered. At 36–461 (ADPNINDVTT…QKPKEWEKYQ (426 aa)) the chain is on the lumenal side. Composition is skewed to low complexity over residues 61–70 (SSPEQQQQQP) and 106–116 (PKSSSSSPQQQ). Residues 117–126 (EKQDTKKESE) are compositionally biased toward basic and acidic residues. The active-site Nucleophile is glutamate 349.

This sequence belongs to the glycosyltransferase 15 family.

The protein localises to the golgi apparatus membrane. Its function is as follows. Involved in O-glycosylation of cell wall and secreted proteins. Transfers an alpha-D-mannosyl residue from GDP-mannose into lipid-linked oligosaccharide, forming an alpha-(1-&gt;2)-D-mannosyl-D-mannose linkage. Mainly responsible for the addition of the third mannose residue in an O-linked mannose pentamer. Can also substitute for MNT1 by adding the second mannose residue. Important for adherence to host surfaces and for virulence. This Candida albicans (strain SC5314 / ATCC MYA-2876) (Yeast) protein is Glycolipid 2-alpha-mannosyltransferase 2 (MNT2).